Consider the following 150-residue polypeptide: D-aminoacyl-tRNA deacylase (150 aa).

A Gly-cisPro motif, important for rejection of L-amino acids motif is present at residues 138 to 139 (GP).

It belongs to the DTD family. Homodimer.

It is found in the cytoplasm. The catalysed reaction is glycyl-tRNA(Ala) + H2O = tRNA(Ala) + glycine + H(+). The enzyme catalyses a D-aminoacyl-tRNA + H2O = a tRNA + a D-alpha-amino acid + H(+). Its function is as follows. An aminoacyl-tRNA editing enzyme that deacylates mischarged D-aminoacyl-tRNAs. Also deacylates mischarged glycyl-tRNA(Ala), protecting cells against glycine mischarging by AlaRS. Acts via tRNA-based rather than protein-based catalysis; rejects L-amino acids rather than detecting D-amino acids in the active site. By recycling D-aminoacyl-tRNA to D-amino acids and free tRNA molecules, this enzyme counteracts the toxicity associated with the formation of D-aminoacyl-tRNA entities in vivo and helps enforce protein L-homochirality. This Sorangium cellulosum (strain So ce56) (Polyangium cellulosum (strain So ce56)) protein is D-aminoacyl-tRNA deacylase.